The chain runs to 332 residues: uncharacterized protein (332 aa).

Belongs to the peptidase U32 family.

This is an uncharacterized protein from Methanocaldococcus jannaschii (strain ATCC 43067 / DSM 2661 / JAL-1 / JCM 10045 / NBRC 100440) (Methanococcus jannaschii).